The sequence spans 355 residues: Sesquiterpene synthase MAJ_08936 (355 aa).

Aspartate 91 and aspartate 96 together coordinate Mg(2+). A DDXXXD motif motif is present at residues 91 to 96; that stretch reads DDLFVD. Position 184 (arginine 184) interacts with substrate. 3 residues coordinate Mg(2+): asparagine 230, serine 234, and glutamate 238.

This sequence belongs to the terpene synthase family. Requires Mg(2+) as cofactor.

It carries out the reaction (2E,6E)-farnesyl diphosphate + H2O = (+)-corvol ether B + diphosphate. It catalyses the reaction (2E,6E)-farnesyl diphosphate + H2O = (+)-corvol ether A + diphosphate. Terpene synthase that catalyzes the conversion of (2E,6E)-farnesyl diphosphate (FPP) into sesquiterpenes which are important for fungi-environment interactions. Produces a mixture consisting of 8 sesquiterpenes including corvol ethers A and B, as well as traces of epizonarene, gamma-cadinene, delta-cadinene, alpha-cadinene, alpha-cadinol, and an unidentified sesquiterpene. The major product is corvol ether A. The chain is Sesquiterpene synthase MAJ_08936 from Metarhizium majus (strain ARSEF 297).